A 320-amino-acid polypeptide reads, in one-letter code: Pyrroline-5-carboxylate reductase 2 (320 aa).

At S2 the chain carries N-acetylserine. Residues 6–11 and S34 contribute to the NADP(+) site; that span reads IGAGQL. NADPH contacts are provided by A8, Q10, L11, S34, E36, N56, V70, K71, and A97. NADP(+)-binding positions include N56, 69 to 72, and 95 to 97; these read AVKP and CAA. An L-proline-binding site is contributed by E164. N230 provides a ligand contact to NADPH. Residues A237 and T238 each contribute to the L-proline site. The segment covering 296 to 305 has biased composition (low complexity); sequence TVSTLTPSSP. Positions 296–320 are disordered; sequence TVSTLTPSSPGKLLTRSLALGGKKD. A Phosphoserine modification is found at S304.

It belongs to the pyrroline-5-carboxylate reductase family. Homodecamer; composed of 5 homodimers. Interacts with LTO1.

Its subcellular location is the cytoplasm. The protein localises to the mitochondrion. The catalysed reaction is L-proline + NADP(+) = (S)-1-pyrroline-5-carboxylate + NADPH + 2 H(+). It catalyses the reaction L-proline + NAD(+) = (S)-1-pyrroline-5-carboxylate + NADH + 2 H(+). Its pathway is amino-acid biosynthesis; L-proline biosynthesis; L-proline from L-glutamate 5-semialdehyde: step 1/1. Its function is as follows. Oxidoreductase that catalyzes the last step in proline biosynthesis, which corresponds to the reduction of pyrroline-5-carboxylate to L-proline using NAD(P)H. At physiologic concentrations, has higher specific activity in the presence of NADH. Involved in cellular response to oxidative stress. In some cell types, such as erythrocytes, its primary function may be the generation of NADP(+). The sequence is that of Pyrroline-5-carboxylate reductase 2 (PYCR2) from Pongo abelii (Sumatran orangutan).